The sequence spans 207 residues: ATP-dependent dethiobiotin synthetase BioD (207 aa).

Position 13–18 (13–18 (EVGKTV)) interacts with ATP. T17 is a Mg(2+) binding site. Residue K33 is part of the active site. ATP-binding positions include D44 and 100-103 (EGAG). The Mg(2+) site is built by D44 and E100.

Belongs to the dethiobiotin synthetase family. Homodimer. Mg(2+) serves as cofactor.

Its subcellular location is the cytoplasm. It carries out the reaction (7R,8S)-7,8-diammoniononanoate + CO2 + ATP = (4R,5S)-dethiobiotin + ADP + phosphate + 3 H(+). It functions in the pathway cofactor biosynthesis; biotin biosynthesis; biotin from 7,8-diaminononanoate: step 1/2. Catalyzes a mechanistically unusual reaction, the ATP-dependent insertion of CO2 between the N7 and N8 nitrogen atoms of 7,8-diaminopelargonic acid (DAPA, also called 7,8-diammoniononanoate) to form a ureido ring. The protein is ATP-dependent dethiobiotin synthetase BioD of Christiangramia forsetii (strain DSM 17595 / CGMCC 1.15422 / KT0803) (Gramella forsetii).